Here is a 1013-residue protein sequence, read N- to C-terminus: AP-2 complex subunit alpha-2 (1013 aa).

HEAT repeat units lie at residues 254–289, 354–391, 393–430, and 521–565; these read AMRA…VVKN, DIIK…VSNA, DIVE…DLSW, and TVST…CIDV. Positions 652-676 are disordered; the sequence is STDPESVARSLSHPNGTLSNIDPQT. Residues 663–675 show a composition bias toward polar residues; the sequence is SHPNGTLSNIDPQ. The region spanning 742–841 is the GAE domain; sequence ALCLKDSGVL…LDFSYKFGTN (100 aa). The segment at 760 to 1013 is required for AP180 binding; the sequence is GIKAEWRGHH…DPGAMLAGLL (254 aa).

This sequence belongs to the adaptor complexes large subunit family. In terms of assembly, adaptor protein complex 2 (AP-2) is a heterotetramer composed of two large adaptins (alpha-type and beta-type subunits), a medium adaptin (mu-type subunit) and a small adaptin (sigma-type subunit). Interacts with AP180.

It is found in the membrane. The protein resides in the coated pit. Functionally, subunit of the adaptor protein complex 2 (AP-2). Adaptor protein complexes function in protein transport via transport vesicles in different membrane traffic pathways. Adaptor protein complexes are vesicle coat components and appear to be involved in cargo selection and vesicle formation. AP-2 is involved in clathrin-dependent endocytosis in which cargo proteins are incorporated into vesicles surrounded by clathrin (clathrin-coated vesicles, CCVs) which are destined for fusion with the early endosome. The complex binds polyphosphoinositides. This is AP-2 complex subunit alpha-2 (ALPHAC-AD) from Arabidopsis thaliana (Mouse-ear cress).